The chain runs to 632 residues: Probable electron transfer flavoprotein-ubiquinone oxidoreductase, mitochondrial (632 aa).

93–107 provides a ligand contact to FAD; that stretch reads VCIVGAGPAGLSAAI. [4Fe-4S] cluster is bound by residues C575, C601, C604, and C607. Residues 592-621 enclose the 4Fe-4S ferredoxin-type domain; sequence KRFVINSQNCVHCKTCDIKDPLQGIQWKTP.

It belongs to the ETF-QO/FixC family. Requires [4Fe-4S] cluster as cofactor. FAD is required as a cofactor.

Its subcellular location is the mitochondrion inner membrane. The catalysed reaction is a ubiquinone + reduced [electron-transfer flavoprotein] = a ubiquinol + oxidized [electron-transfer flavoprotein] + H(+). Functionally, accepts electrons from ETF and reduces ubiquinone. The polypeptide is Probable electron transfer flavoprotein-ubiquinone oxidoreductase, mitochondrial (Schizosaccharomyces pombe (strain 972 / ATCC 24843) (Fission yeast)).